Here is an 847-residue protein sequence, read N- to C-terminus: Beta-hexosaminidase (847 aa).

3 disulfide bridges follow: cysteine 31/cysteine 40, cysteine 377/cysteine 385, and cysteine 484/cysteine 530. Residue glutamate 519 is the Proton donor of the active site.

Belongs to the glycosyl hydrolase 20 family.

The catalysed reaction is Hydrolysis of terminal non-reducing N-acetyl-D-hexosamine residues in N-acetyl-beta-D-hexosaminides.. The protein operates within glycan degradation; chitin degradation. Its function is as follows. Hydrolysis of terminal, non-reducing N-acetyl-beta-D-glucosamine residues in chitobiose and higher analogs, and in glycoproteins. This Vibrio vulnificus protein is Beta-hexosaminidase (hex).